A 271-amino-acid polypeptide reads, in one-letter code: Acyl-[acyl-carrier-protein]--UDP-N-acetylglucosamine O-acyltransferase (271 aa).

This sequence belongs to the transferase hexapeptide repeat family. LpxA subfamily. As to quaternary structure, homotrimer.

Its subcellular location is the cytoplasm. It carries out the reaction a (3R)-hydroxyacyl-[ACP] + UDP-N-acetyl-alpha-D-glucosamine = a UDP-3-O-[(3R)-3-hydroxyacyl]-N-acetyl-alpha-D-glucosamine + holo-[ACP]. Its pathway is glycolipid biosynthesis; lipid IV(A) biosynthesis; lipid IV(A) from (3R)-3-hydroxytetradecanoyl-[acyl-carrier-protein] and UDP-N-acetyl-alpha-D-glucosamine: step 1/6. Its function is as follows. Involved in the biosynthesis of lipid A, a phosphorylated glycolipid that anchors the lipopolysaccharide to the outer membrane of the cell. This chain is Acyl-[acyl-carrier-protein]--UDP-N-acetylglucosamine O-acyltransferase, found in Rhizobium rhizogenes (strain K84 / ATCC BAA-868) (Agrobacterium radiobacter).